Here is a 353-residue protein sequence, read N- to C-terminus: Chorismate synthase (353 aa).

Positions 48 and 54 each coordinate NADP(+). FMN is bound by residues 125–127 (RSS), 238–239 (NA), glycine 278, 293–297 (KPTSS), and arginine 319.

It belongs to the chorismate synthase family. Homotetramer. The cofactor is FMNH2.

It carries out the reaction 5-O-(1-carboxyvinyl)-3-phosphoshikimate = chorismate + phosphate. Its pathway is metabolic intermediate biosynthesis; chorismate biosynthesis; chorismate from D-erythrose 4-phosphate and phosphoenolpyruvate: step 7/7. In terms of biological role, catalyzes the anti-1,4-elimination of the C-3 phosphate and the C-6 proR hydrogen from 5-enolpyruvylshikimate-3-phosphate (EPSP) to yield chorismate, which is the branch point compound that serves as the starting substrate for the three terminal pathways of aromatic amino acid biosynthesis. This reaction introduces a second double bond into the aromatic ring system. In Buchnera aphidicola subsp. Schizaphis graminum (strain Sg), this protein is Chorismate synthase.